The sequence spans 529 residues: Type I restriction enzyme StySJI methylase subunit (529 aa).

S-adenosyl-L-methionine contacts are provided by residues 148–153 (QYFTPR), 178–180 (TAG), and glutamate 216. The segment at 405–444 (YGEDPHGLSPREEGEWSFNAEESEVADSEENKNTDQHQAT) is disordered. Residues 407–418 (EDPHGLSPREEG) show a composition bias toward basic and acidic residues.

It belongs to the N(4)/N(6)-methyltransferase family. As to quaternary structure, the type I restriction/modification system is composed of three polypeptides R, M and S; the restriction enzyme has stoichiometry R(2)M(2)S(1) while the methyltransferase is M(2)S(1).

The catalysed reaction is a 2'-deoxyadenosine in DNA + S-adenosyl-L-methionine = an N(6)-methyl-2'-deoxyadenosine in DNA + S-adenosyl-L-homocysteine + H(+). In terms of biological role, the subtype gamma methyltransferase (M) subunit of a type I restriction enzyme. The M and S subunits together form a methyltransferase (MTase) that methylates two adenine residues of the sequence 5'-GAGN(6)GTRC-3'. In the presence of the R subunit the complex can also act as an endonuclease, binding to the same target sequence but cutting the DNA some distance from this site. Whether the DNA is cut or modified depends on the methylation state of the target sequence. When the target site is unmodified, the DNA is cut. When the target site is hemimethylated, the complex acts as a maintenance MTase modifying the DNA so that both strands become methylated. After locating a non-methylated recognition site, the enzyme complex serves as a molecular motor that translocates DNA in an ATP-dependent manner until a collision occurs that triggers cleavage. The protein is Type I restriction enzyme StySJI methylase subunit of Salmonella typhimurium (strain LT2 / SGSC1412 / ATCC 700720).